A 536-amino-acid chain; its full sequence is Cytoplasmic dynein 2 intermediate chain 2 (536 aa).

At Ser15 the chain carries Phosphoserine. The tract at residues 80–93 (RNHVDAQVQTEAPV) is DYNLL2 binding. Residues 106–131 (PRLAAFLRRVEAMVIRELNKNWQSHA) are DYNLRB1 binding. 5 WD repeats span residues 215–255 (EVPS…DPLL), 264–308 (THTD…QLQL), 390–430 (PHGG…PLTS), 433–473 (LSLK…QKPT), and 480–520 (QDES…TEQG).

Belongs to the dynein light intermediate chain family. In terms of assembly, the cytoplasmic dynein 2 complex consists of two catalytic heavy chains (HCs) and a number of non-catalytic subunits presented by intermediate chains (ICs), light intermediate chains (LICs) and light chains (LCs). Among them, a heavy chain (DYNC2H1), two intermediate chains (DYNC2I2 and DYNC2I1), a light intermediate chain (DYNC2LI1), and a light chain (DYNLT2B) are unique to the cytoplasmic dynein complex 2, but a subset of the light chains are also shared by dynein-1 and dynein-2 complexes. Interacts with DYNC2I1; their C-terminal domains each bind a copy of the heavy chain, and their extended N-terminal regions are held together by an array of light chain dimers. Interacts with DYNLL2; this interaction is essential for dynein-2-mediated retrograde trafficking of ciliary proteins. Interacts with DYNLRB1; this interaction is essential for dynein-2-mediated retrograde trafficking of ciliary proteins. Interacts (via the WD domains) with MAP3K7 and TAB3. Interacts (via WD domains) with TAB2 (via C-terminus). Interacts (via WD domains) with TRAF6 (via TRAF-type domains). As to expression, expressed in several cell lines (at protein level).

It localises to the cytoplasm. Its subcellular location is the cytoskeleton. The protein resides in the cilium basal body. The protein localises to the cilium axoneme. It is found in the microtubule organizing center. It localises to the centrosome. Its subcellular location is the cell projection. The protein resides in the cilium. The protein localises to the filopodium. Acts as one of several non-catalytic accessory components of the cytoplasmic dynein 2 complex (dynein-2 complex), a motor protein complex that drives the movement of cargos along microtubules within cilia and flagella in concert with the intraflagellar transport (IFT) system. DYNC2I2 plays a major role in retrograde ciliary protein trafficking and in ciliogenesis. Required also to maintain a functional transition zone. Functionally, acts as a negative regulator of the Toll-like and IL-1R receptor signaling pathways. Inhibits the MAP3K7-induced NF-kappa-B activation pathway. Inhibits MAP3K7 phosphorylation at 'Thr-184' and 'Thr-187' upon Il-1 beta stimulation. The polypeptide is Cytoplasmic dynein 2 intermediate chain 2 (Homo sapiens (Human)).